A 320-amino-acid chain; its full sequence is Ferrochelatase (320 aa).

Positions 194 and 275 each coordinate Fe cation.

This sequence belongs to the ferrochelatase family. In terms of assembly, monomer.

The protein localises to the cytoplasm. The catalysed reaction is heme b + 2 H(+) = protoporphyrin IX + Fe(2+). Its pathway is porphyrin-containing compound metabolism; protoheme biosynthesis; protoheme from protoporphyrin-IX: step 1/1. Its function is as follows. Catalyzes the ferrous insertion into protoporphyrin IX. The protein is Ferrochelatase of Salmonella paratyphi A (strain ATCC 9150 / SARB42).